A 188-amino-acid polypeptide reads, in one-letter code: Pyridoxal 5'-phosphate synthase subunit PdxT (188 aa).

46–48 (GES) contributes to the L-glutamine binding site. Cys78 acts as the Nucleophile in catalysis. L-glutamine contacts are provided by residues Arg105 and 134 to 135 (IR). Catalysis depends on charge relay system residues His170 and Glu172.

It belongs to the glutaminase PdxT/SNO family. In the presence of PdxS, forms a dodecamer of heterodimers. Only shows activity in the heterodimer.

It carries out the reaction aldehydo-D-ribose 5-phosphate + D-glyceraldehyde 3-phosphate + L-glutamine = pyridoxal 5'-phosphate + L-glutamate + phosphate + 3 H2O + H(+). The enzyme catalyses L-glutamine + H2O = L-glutamate + NH4(+). It participates in cofactor biosynthesis; pyridoxal 5'-phosphate biosynthesis. In terms of biological role, catalyzes the hydrolysis of glutamine to glutamate and ammonia as part of the biosynthesis of pyridoxal 5'-phosphate. The resulting ammonia molecule is channeled to the active site of PdxS. The protein is Pyridoxal 5'-phosphate synthase subunit PdxT of Desulforamulus reducens (strain ATCC BAA-1160 / DSM 100696 / MI-1) (Desulfotomaculum reducens).